The primary structure comprises 723 residues: Polyribonucleotide nucleotidyltransferase (723 aa).

Mg(2+) contacts are provided by Asp-497 and Asp-503. The KH domain occupies 564–623; sequence PRLLSFRIDPELIGTVIGPGGRTIKGITERTNTKIDIEDGGIVTIASHDGAAAEAAQRII. An S1 motif domain is found at 633-701; it reads GEVFTGTITR…NRGRINLTLR (69 aa). The segment at 701–723 is disordered; the sequence is RGVPQNGEETQSEPAPTPVAPLN.

This sequence belongs to the polyribonucleotide nucleotidyltransferase family. The cofactor is Mg(2+).

The protein resides in the cytoplasm. It catalyses the reaction RNA(n+1) + phosphate = RNA(n) + a ribonucleoside 5'-diphosphate. Involved in mRNA degradation. Catalyzes the phosphorolysis of single-stranded polyribonucleotides processively in the 3'- to 5'-direction. The protein is Polyribonucleotide nucleotidyltransferase of Prochlorococcus marinus (strain MIT 9313).